The primary structure comprises 66 residues: SPbeta prophage-derived uncharacterized protein YopM (66 aa).

This chain is SPbeta prophage-derived uncharacterized protein YopM (yopM), found in Bacillus subtilis (strain 168).